The following is a 318-amino-acid chain: Glycine--tRNA ligase alpha subunit (318 aa).

Belongs to the class-II aminoacyl-tRNA synthetase family. Tetramer of two alpha and two beta subunits.

The protein resides in the cytoplasm. It catalyses the reaction tRNA(Gly) + glycine + ATP = glycyl-tRNA(Gly) + AMP + diphosphate. The sequence is that of Glycine--tRNA ligase alpha subunit (glyQ) from Moraxella catarrhalis (Branhamella catarrhalis).